We begin with the raw amino-acid sequence, 482 residues long: C3a anaphylatoxin chemotactic receptor (482 aa).

The Extracellular segment spans residues 1 to 23; sequence MASFSAETNSTDLLSQPWNEPPV. Residue asparagine 9 is glycosylated (N-linked (GlcNAc...) asparagine). A helical transmembrane segment spans residues 24–46; the sequence is ILSMVILSLTFLLGLPGNGLVLW. Residues 47 to 57 are Cytoplasmic-facing; the sequence is VAGLKMQRTVN. The chain crosses the membrane as a helical span at residues 58–80; the sequence is TIWFLHLTLADLLCCLSLPFSLA. Over 81 to 96 the chain is Extracellular; it reads HLALQGQWPYGRFLCK. Residues cysteine 95 and cysteine 172 are joined by a disulfide bond. A helical transmembrane segment spans residues 97–118; sequence LIPSIIVLNMFASVFLLTAISL. The Cytoplasmic portion of the chain corresponds to 119–139; sequence DRCLVVFKPIWCQNHRNVGMA. The helical transmembrane segment at 140–160 threads the bilayer; the sequence is CSICGCIWVVAFVMCIPVFVY. The Extracellular portion of the chain corresponds to 161–340; that stretch reads REIFTTDNHN…TPLVAITITR (180 aa). Sulfotyrosine occurs at positions 174 and 184. N-linked (GlcNAc...) asparagine glycosylation occurs at asparagine 194. Serine 266 is a glycosylation site (O-linked (GalNAc...) serine). Tyrosine 318 carries the sulfotyrosine modification. Residues 341 to 360 form a helical membrane-spanning segment; it reads LVVGFLLPSVIMIACYSFIV. At 361–377 the chain is on the cytoplasmic side; it reads FRMQRGRFAKSQSKTFR. The chain crosses the membrane as a helical span at residues 378-400; it reads VAVVVVAVFLVCWTPYHIFGVLS. Topologically, residues 401–417 are extracellular; it reads LLTDPETPLGKTLMSWD. The helical transmembrane segment at 418-438 threads the bilayer; sequence HVCIALASANSCFNPFLYALL. The Cytoplasmic portion of the chain corresponds to 439–482; it reads GKDFRKKARQSIQGILEAAFSEELTRSTHCPSNNVISERNSTTV. The residue at position 459 (serine 459) is a Phosphoserine. The residue at position 463 (threonine 463) is a Phosphothreonine.

The protein belongs to the G-protein coupled receptor 1 family. In terms of assembly, interacts with VGF-derived peptide TLQP-21. In terms of processing, among the sulfation sites Tyr-174 is essential for binding of C3a anaphylatoxin. Post-translationally, O-glycosylated. Widely expressed in several differentiated hematopoietic cell lines, in the lung, spleen, ovary, placenta, small intestine, throughout the brain, heart, and endothelial cells. Mostly expressed in lymphoid tissues.

It localises to the cell membrane. In terms of biological role, receptor for the chemotactic and inflammatory peptide anaphylatoxin C3a. This receptor stimulates chemotaxis, granule enzyme release and superoxide anion production. The chain is C3a anaphylatoxin chemotactic receptor (C3AR1) from Homo sapiens (Human).